The primary structure comprises 378 residues: TelA-like protein SAS1347 (378 aa).

It belongs to the TelA family.

This chain is TelA-like protein SAS1347, found in Staphylococcus aureus (strain MSSA476).